A 96-amino-acid chain; its full sequence is MCHTSCSSGCQPACCAPSPCQASCYIPVGCQSSVCVPVSFKPAVCVPVRCQSSVCVPVSCRPVVYAAPSCQSSGCCQPSCTSVLCRPISCSTPSCC.

Tandem repeats lie at residues 10 to 14 (CQPAC), 15 to 19 (CAPSP), 24 to 28 (CYIPV), 30 to 34 (CQSSV), 35 to 39 (CVPVS), 45 to 49 (CVPVR), 50 to 54 (CQSSV), 55 to 59 (CVPVS), 60 to 64 (CRPVV), 70 to 74 (CQSSG), 75 to 79 (CCQPS), 80 to 84 (CTSVL), 85 to 89 (CRPIS), and 90 to 94 (CSTPS). Positions 10–94 (CQPACCAPSP…CRPISCSTPS (85 aa)) are 14 X 5 AA approximate repeats.

This sequence belongs to the KRTAP type 12 family. As to quaternary structure, interacts with hair keratins. In terms of tissue distribution, restricted to a narrow region of the hair fiber cuticle, lying approximately 20 cell layers above the apex of the dermal papilla of the hair root; not detected in any other tissues.

In the hair cortex, hair keratin intermediate filaments are embedded in an interfilamentous matrix, consisting of hair keratin-associated proteins (KRTAP), which are essential for the formation of a rigid and resistant hair shaft through their extensive disulfide bond cross-linking with abundant cysteine residues of hair keratins. The matrix proteins include the high-sulfur and high-glycine-tyrosine keratins. The chain is Keratin-associated protein 12-1 (KRTAP12-1) from Homo sapiens (Human).